A 493-amino-acid chain; its full sequence is Probable cytochrome P450 508A2 (493 aa).

A helical membrane pass occupies residues 1 to 21 (MIFGIIVYLFLIYILHNAYSK). Residue Cys439 coordinates heme.

It belongs to the cytochrome P450 family. Heme is required as a cofactor.

Its subcellular location is the membrane. This is Probable cytochrome P450 508A2 (cyp508A2-1) from Dictyostelium discoideum (Social amoeba).